A 148-amino-acid chain; its full sequence is Caltractin (148 aa).

EF-hand domains are found at residues 4 to 39, 40 to 75, 77 to 112, and 113 to 148; these read EQKQ…LGFE, PKKE…KMGE, DSRE…LGEN, and MTDE…TSLF. Ca(2+) is bound by residues Asp17, Asp19, Ser21, Thr23, Glu28, Asp53, Asp55, Ser57, Thr59, and Glu64. Ca(2+) contacts are provided by Asp126, Asp128, Asp130, Glu132, and Glu137.

This sequence belongs to the centrin family. Ubiquitous.

In terms of biological role, this calcium-binding protein is found in the basal body complexes (the functional homolog of the centrosome in animal cell). In mitotic cells it is specifically associated with the poles of the mitotic spindles at the sites of the duplicated basal body complexes. This is Caltractin from Tetraselmis striata (Green microalga).